The sequence spans 501 residues: Probable cytochrome P450 6t3 (501 aa).

Cys-444 is a binding site for heme.

This sequence belongs to the cytochrome P450 family. It depends on heme as a cofactor.

The protein resides in the endoplasmic reticulum membrane. It is found in the microsome membrane. Functionally, may be involved in the metabolism of insect hormones and in the breakdown of synthetic insecticides. In Drosophila melanogaster (Fruit fly), this protein is Probable cytochrome P450 6t3 (Cyp6t3).